We begin with the raw amino-acid sequence, 426 residues long: Dihydroorotase (426 aa).

Zn(2+)-binding residues include His55 and His57. Residues 57 to 59 (HLR) and Asn89 contribute to the substrate site. Zn(2+)-binding residues include Asp147, His174, His233, and Asp306. Asp306 is a catalytic residue. Substrate is bound by residues His310 and 324–325 (FG).

The protein belongs to the metallo-dependent hydrolases superfamily. DHOase family. Class I DHOase subfamily. Requires Zn(2+) as cofactor.

The catalysed reaction is (S)-dihydroorotate + H2O = N-carbamoyl-L-aspartate + H(+). The protein operates within pyrimidine metabolism; UMP biosynthesis via de novo pathway; (S)-dihydroorotate from bicarbonate: step 3/3. Catalyzes the reversible cyclization of carbamoyl aspartate to dihydroorotate. In Thermus aquaticus, this protein is Dihydroorotase.